The following is a 255-amino-acid chain: MWIGIISLFPEMFKAITEFGVTGRAVKQNLLQVSCWNPRDFTHDKHKTVDDRPYGGGPGMLMMVQPLRDAIHAAKAEAGDGVKVIYLSPQGRKLDQTGVTELAANEKLILVCGRYEGIDERLIQTEIDEEWSIGDYVLTGGELPAMTLIDAVARFVPGVLGKQASAEEDSFAEGLLDCPHYTRPEVLDGYVVPPVLMSGNHEEIRKWRLKQSLERTWLRRPELLEKLALTDEQKKLLKDIIEAYHIRQSKTSDNG.

Residues glycine 113 and 133 to 138 (IGDYVL) contribute to the S-adenosyl-L-methionine site.

This sequence belongs to the RNA methyltransferase TrmD family. As to quaternary structure, homodimer.

It is found in the cytoplasm. It carries out the reaction guanosine(37) in tRNA + S-adenosyl-L-methionine = N(1)-methylguanosine(37) in tRNA + S-adenosyl-L-homocysteine + H(+). Specifically methylates guanosine-37 in various tRNAs. The polypeptide is tRNA (guanine-N(1)-)-methyltransferase (Mannheimia succiniciproducens (strain KCTC 0769BP / MBEL55E)).